A 197-amino-acid chain; its full sequence is Recombination protein RecR (197 aa).

The C4-type zinc finger occupies 57 to 72 (CSVCFAITEDDPCWIC). Residues 79 to 174 (GTICVVEEPQ…KVTRLAHGIP (96 aa)) enclose the Toprim domain.

Belongs to the RecR family.

May play a role in DNA repair. It seems to be involved in an RecBC-independent recombinational process of DNA repair. It may act with RecF and RecO. This is Recombination protein RecR from Geobacter sp. (strain M21).